The primary structure comprises 142 residues: MSGTGLSLFVTGLILNCLNSICQIYFTILYGDLEADYINSIELCKRVNRLSVPEAILQAFISALFLFNGYWFVFLLNVPVLAYNASKVYKKTHLLDATDIFRKLGRCKIECFLKLGFYLLIFFFYFYRMVTALLENDANLIS.

Residues 1 to 7 (MSGTGLS) are Cytoplasmic-facing. A helical membrane pass occupies residues 8–28 (LFVTGLILNCLNSICQIYFTI). Over 29-55 (LYGDLEADYINSIELCKRVNRLSVPEA) the chain is Extracellular. Residues 56–76 (ILQAFISALFLFNGYWFVFLL) traverse the membrane as a helical segment. The Cytoplasmic portion of the chain corresponds to 77–114 (NVPVLAYNASKVYKKTHLLDATDIFRKLGRCKIECFLK). Residues 115–135 (LGFYLLIFFFYFYRMVTALLE) traverse the membrane as a helical segment. Residues 136 to 142 (NDANLIS) lie on the Extracellular side of the membrane.

Belongs to the cornichon family.

It localises to the membrane. The sequence is that of ER-derived vesicles protein ERV15 (ERV15) from Saccharomyces cerevisiae (strain ATCC 204508 / S288c) (Baker's yeast).